We begin with the raw amino-acid sequence, 56 residues long: Large ribosomal subunit protein bL33 (56 aa).

The protein belongs to the bacterial ribosomal protein bL33 family.

This is Large ribosomal subunit protein bL33 from Aliarcobacter butzleri (strain RM4018) (Arcobacter butzleri).